The following is a 350-amino-acid chain: MSTRLGELVERLGGRLIGDADIEVVGIAPLNDADASHITFLSNPKFRGQAAQTHAAALILSAADDEVVAADYQGARIVTANPYAYFARAAQFFAALHAHIAPAGIHPSASVDPTAQIAASASIGPFVAVEAGAVIEDGCVIDAGCFIGRDARVGSGTHFYPRVTFLAGCRIGARGIIHSGAVIGADGFGFANEGGVYIKIPQTGAVRIGDDVEIGANTSIDRGALADTVLEDGVKLDNQIQIGHNCHIGAHTAMAGCVGVAGSAIIGKYCTFGGAAMVLGHLTIADHVHISSGSMVSRSIREPGQYTGFYPLAKNAEWEKSAVIVRNLATMREKIRELEKTIKSLGDKPE.

Catalysis depends on histidine 244, which acts as the Proton acceptor.

This sequence belongs to the transferase hexapeptide repeat family. LpxD subfamily. In terms of assembly, homotrimer.

The enzyme catalyses a UDP-3-O-[(3R)-3-hydroxyacyl]-alpha-D-glucosamine + a (3R)-hydroxyacyl-[ACP] = a UDP-2-N,3-O-bis[(3R)-3-hydroxyacyl]-alpha-D-glucosamine + holo-[ACP] + H(+). It functions in the pathway bacterial outer membrane biogenesis; LPS lipid A biosynthesis. Functionally, catalyzes the N-acylation of UDP-3-O-acylglucosamine using 3-hydroxyacyl-ACP as the acyl donor. Is involved in the biosynthesis of lipid A, a phosphorylated glycolipid that anchors the lipopolysaccharide to the outer membrane of the cell. The polypeptide is UDP-3-O-acylglucosamine N-acyltransferase (Janthinobacterium sp. (strain Marseille) (Minibacterium massiliensis)).